Here is a 170-residue protein sequence, read N- to C-terminus: Large ribosomal subunit protein uL10 (170 aa).

It belongs to the universal ribosomal protein uL10 family. In terms of assembly, part of the ribosomal stalk of the 50S ribosomal subunit. The N-terminus interacts with L11 and the large rRNA to form the base of the stalk. The C-terminus forms an elongated spine to which L12 dimers bind in a sequential fashion forming a multimeric L10(L12)X complex.

Functionally, forms part of the ribosomal stalk, playing a central role in the interaction of the ribosome with GTP-bound translation factors. The polypeptide is Large ribosomal subunit protein uL10 (Chlamydia caviae (strain ATCC VR-813 / DSM 19441 / 03DC25 / GPIC) (Chlamydophila caviae)).